Consider the following 255-residue polypeptide: Octanoyltransferase (255 aa).

A BPL/LPL catalytic domain is found at 54–238; sequence GDANELVWLL…SFTTIFGATV (185 aa). Substrate contacts are provided by residues 92–99, 167–169, and 180–182; these read RGGQLTYH, AIG, and GIA. Cysteine 198 acts as the Acyl-thioester intermediate in catalysis.

Belongs to the LipB family.

It localises to the cytoplasm. It catalyses the reaction octanoyl-[ACP] + L-lysyl-[protein] = N(6)-octanoyl-L-lysyl-[protein] + holo-[ACP] + H(+). It functions in the pathway protein modification; protein lipoylation via endogenous pathway; protein N(6)-(lipoyl)lysine from octanoyl-[acyl-carrier-protein]: step 1/2. In terms of biological role, catalyzes the transfer of endogenously produced octanoic acid from octanoyl-acyl-carrier-protein onto the lipoyl domains of lipoate-dependent enzymes. Lipoyl-ACP can also act as a substrate although octanoyl-ACP is likely to be the physiological substrate. This chain is Octanoyltransferase, found in Rhodopseudomonas palustris (strain BisB5).